The primary structure comprises 349 residues: Short-wave-sensitive opsin 1 (349 aa).

At 1–34 (MSKMSEEEEFLLFKNISLVGPWDGPQYHLAPVWA) the chain is on the extracellular side. N-linked (GlcNAc...) asparagine glycosylation is present at Asn-15. The helical transmembrane segment at 35-59 (FHLQAVFMGFVFFVGTPLNATVLVA) threads the bilayer. At 60-71 (TLRYRKLRQPLN) the chain is on the cytoplasmic side. A helical membrane pass occupies residues 72–97 (YILVNVSLGGFIYCIFSVFIVFITSC). The Extracellular segment spans residues 98 to 111 (YGYFVFGRHVCALE). An intrachain disulfide couples Cys-108 to Cys-185. Residues 112–131 (AFLGCTAGLVTGWSLAFLAF) traverse the membrane as a helical segment. At 132–150 (ERYIIICKPFGNFRFSSKH) the chain is on the cytoplasmic side. Residues 151–174 (ALMVVVATWTIGIGVSIPPFFGWS) form a helical membrane-spanning segment. At 175-200 (RFVPEGLQCSCGPDWYTVGTKYYSEY) the chain is on the extracellular side. A helical membrane pass occupies residues 201-228 (YTWFLFIFCYIVPLSLICFSYSQLLGAL). The Cytoplasmic portion of the chain corresponds to 229–250 (RAVAAQQQESASTQKAEREVSH). The chain crosses the membrane as a helical span at residues 251–274 (MVVVMVGSFCLCYTPYAALAMYIV). Residues 275 to 282 (NNRNHGVD) lie on the Extracellular side of the membrane. The chain crosses the membrane as a helical span at residues 283 to 307 (LRLVTIPAFFSKSACVYNPIIYCFM). Residue Lys-294 is modified to N6-(retinylidene)lysine. Over 308–349 (NKQFRACIMEMVCGKPMTDESELSSSQKTEVSTVSSSQVGPN) the chain is Cytoplasmic. The interval 327 to 349 (ESELSSSQKTEVSTVSSSQVGPN) is disordered. Residues 330-349 (LSSSQKTEVSTVSSSQVGPN) show a composition bias toward polar residues.

Belongs to the G-protein coupled receptor 1 family. Opsin subfamily. In terms of processing, phosphorylated on some or all of the serine and threonine residues present in the C-terminal region.

The protein resides in the cell membrane. Its subcellular location is the photoreceptor inner segment. It localises to the cell projection. The protein localises to the cilium. It is found in the photoreceptor outer segment. The protein resides in the cytoplasm. Its subcellular location is the perinuclear region. Functionally, visual pigments are the light-absorbing molecules that mediate vision. They consist of an apoprotein, opsin, covalently linked to cis-retinal. Required for the maintenance of cone outer segment organization in the ventral retina, but not essential for the maintenance of functioning cone photoreceptors. Involved in ensuring correct abundance and localization of retinal membrane proteins. May increase spectral sensitivity in dim light. The sequence is that of Short-wave-sensitive opsin 1 (OPN1SW) from Bos taurus (Bovine).